The following is a 241-amino-acid chain: Octanoyltransferase (241 aa).

Positions 43 to 228 (AETPDEIWLV…CLTANLDGSP (186 aa)) constitute a BPL/LPL catalytic domain. Residues 83–90 (RGGQITYH), 159–161 (ALG), and 172–174 (GVS) contribute to the substrate site. Cysteine 190 serves as the catalytic Acyl-thioester intermediate.

The protein belongs to the LipB family.

The protein localises to the cytoplasm. The enzyme catalyses octanoyl-[ACP] + L-lysyl-[protein] = N(6)-octanoyl-L-lysyl-[protein] + holo-[ACP] + H(+). Its pathway is protein modification; protein lipoylation via endogenous pathway; protein N(6)-(lipoyl)lysine from octanoyl-[acyl-carrier-protein]: step 1/2. Its function is as follows. Catalyzes the transfer of endogenously produced octanoic acid from octanoyl-acyl-carrier-protein onto the lipoyl domains of lipoate-dependent enzymes. Lipoyl-ACP can also act as a substrate although octanoyl-ACP is likely to be the physiological substrate. This chain is Octanoyltransferase, found in Paraburkholderia xenovorans (strain LB400).